Reading from the N-terminus, the 323-residue chain is Sporulation-delaying protein SdpB (323 aa).

6 helical membrane-spanning segments follow: residues 27–49 (LLGFSTLLVLLFNSTDILFSYSA), 70–92 (SINFEIIRYLMIFILTLVVIGWR), 112–134 (LTIDGGEQIATVLSFLILPVTLL), 155–177 (TVLFYIMTIIKIQVFIIYLNAAL), 219–241 (IVVITWLVTIFELFLAASIISNI), and 248–270 (LVLGILFHIGIIFSIGIVSFGLI).

Its subcellular location is the cell membrane. Required for the maturation of SdpC to SDP. Not required for SdpC signal peptide cleavage, secretion from the cell or disulfide bond formation. The sequence is that of Sporulation-delaying protein SdpB from Bacillus subtilis (strain 168).